Consider the following 289-residue polypeptide: CRISPR-associated endoribonuclease Cas6 2 (289 aa).

The protein belongs to the CRISPR-associated endoribonuclease Cas6 family. Possibly part of the aCascade ribonucleoprotein complex. Requires Mg(2+) as cofactor.

Functionally, CRISPR (clustered regularly interspaced short palindromic repeat) is an adaptive immune system that provides protection against mobile genetic elements (viruses, transposable elements and conjugative plasmids). CRISPR clusters contain sequences complementary to antecedent mobile elements and target invading nucleic acids. CRISPR clusters are transcribed and processed into CRISPR RNA (crRNA). Functions as a ssRNA-specific endoribonuclease, generating an 8 base-long tag known as the 5' handle. This Saccharolobus solfataricus (strain ATCC 35092 / DSM 1617 / JCM 11322 / P2) (Sulfolobus solfataricus) protein is CRISPR-associated endoribonuclease Cas6 2 (cas6b).